The following is a 169-amino-acid chain: Procalin (169 aa).

An N-terminal signal peptide occupies residues 1–18 (MKTFIVITFIGILSYAYA). Disulfide bonds link cysteine 21/cysteine 125, cysteine 54/cysteine 168, and cysteine 83/cysteine 97.

The protein belongs to the calycin superfamily. Triabin family. In terms of tissue distribution, expressed in salivary glands.

The protein localises to the secreted. This is Procalin from Hospesneotomae protracta (Western bloodsucking conenose).